The sequence spans 1075 residues: Carbamoyl phosphate synthase large chain (1075 aa).

The segment at 2–403 is carboxyphosphate synthetic domain; the sequence is PKRTDIKSIL…SLQKALRGLE (402 aa). 12 residues coordinate ATP: Arg-129, Arg-169, Gly-175, Gly-176, Glu-208, Leu-210, Glu-215, Gly-241, Ile-242, His-243, Gln-285, and Glu-299. The 196-residue stretch at 133 to 328 folds into the ATP-grasp 1 domain; sequence DIAMKKIGLD…IAKVAAKLAV (196 aa). Gln-285, Glu-299, and Asn-301 together coordinate Mg(2+). Mn(2+) contacts are provided by Gln-285, Glu-299, and Asn-301. Residues 404–553 are oligomerization domain; the sequence is VGATGFDPKV…YSTYEDECEA (150 aa). Residues 554-936 form a carbamoyl phosphate synthetic domain region; sequence NPSIDRDKIM…AFAKAQLGSN (383 aa). The ATP-grasp 2 domain maps to 679-870; that stretch reads QHAVDRLKLK…LAKVAARVMA (192 aa). 10 residues coordinate ATP: Arg-715, Arg-754, Leu-756, Glu-761, Gly-786, Val-787, His-788, Ser-789, Gln-829, and Glu-841. Residues Gln-829, Glu-841, and Asn-843 each coordinate Mg(2+). Positions 829, 841, and 843 each coordinate Mn(2+). In terms of domain architecture, MGS-like spans 937–1075; the sequence is STMKKQGRAL…QEMHAQIKKS (139 aa). Residues 937-1075 form an allosteric domain region; sequence STMKKQGRAL…QEMHAQIKKS (139 aa).

Belongs to the CarB family. Composed of two chains; the small (or glutamine) chain promotes the hydrolysis of glutamine to ammonia, which is used by the large (or ammonia) chain to synthesize carbamoyl phosphate. Tetramer of heterodimers (alpha,beta)4. The cofactor is Mg(2+). Mn(2+) serves as cofactor.

The catalysed reaction is hydrogencarbonate + L-glutamine + 2 ATP + H2O = carbamoyl phosphate + L-glutamate + 2 ADP + phosphate + 2 H(+). It catalyses the reaction hydrogencarbonate + NH4(+) + 2 ATP = carbamoyl phosphate + 2 ADP + phosphate + 2 H(+). The protein operates within amino-acid biosynthesis; L-arginine biosynthesis; carbamoyl phosphate from bicarbonate: step 1/1. It functions in the pathway pyrimidine metabolism; UMP biosynthesis via de novo pathway; (S)-dihydroorotate from bicarbonate: step 1/3. In terms of biological role, large subunit of the glutamine-dependent carbamoyl phosphate synthetase (CPSase). CPSase catalyzes the formation of carbamoyl phosphate from the ammonia moiety of glutamine, carbonate, and phosphate donated by ATP, constituting the first step of 2 biosynthetic pathways, one leading to arginine and/or urea and the other to pyrimidine nucleotides. The large subunit (synthetase) binds the substrates ammonia (free or transferred from glutamine from the small subunit), hydrogencarbonate and ATP and carries out an ATP-coupled ligase reaction, activating hydrogencarbonate by forming carboxy phosphate which reacts with ammonia to form carbamoyl phosphate. In Salmonella typhimurium (strain LT2 / SGSC1412 / ATCC 700720), this protein is Carbamoyl phosphate synthase large chain.